The following is a 226-amino-acid chain: Ribosome maturation factor RimP (226 aa).

Residues 190-226 are disordered; it reads VFPDTTRPQPGGKTGQRKKAQPKKPARGGAPHDDTTD. Basic residues predominate over residues 204–215; that stretch reads GQRKKAQPKKPA.

The protein belongs to the RimP family.

The protein resides in the cytoplasm. In terms of biological role, required for maturation of 30S ribosomal subunits. This is Ribosome maturation factor RimP from Nitratidesulfovibrio vulgaris (strain DSM 19637 / Miyazaki F) (Desulfovibrio vulgaris).